Here is a 1057-residue protein sequence, read N- to C-terminus: Probable sucrose-phosphate synthase 1 (1057 aa).

Positions Arg103 to Thr115 are enriched in basic and acidic residues. Disordered stretches follow at residues Arg103–Ser143, Pro439–Asp459, and Arg670–Leu693. Positions Gly442–Glu452 are enriched in acidic residues.

It belongs to the glycosyltransferase 1 family. Homodimer or homotetramer.

The catalysed reaction is beta-D-fructose 6-phosphate + UDP-alpha-D-glucose = sucrose 6(F)-phosphate + UDP + H(+). Its pathway is glycan biosynthesis; sucrose biosynthesis; sucrose from D-fructose 6-phosphate and UDP-alpha-D-glucose: step 1/2. Activity is regulated by phosphorylation and moderated by concentration of metabolites and light. Plays a role in photosynthetic sucrose synthesis by catalyzing the rate-limiting step of sucrose biosynthesis from UDP-glucose and fructose- 6-phosphate. Involved in the regulation of carbon partitioning in the leaves of plants. May regulate the synthesis of sucrose and therefore play a major role as a limiting factor in the export of photoassimilates out of the leaf. Plays a role for sucrose availability that is essential for plant growth and fiber elongation. The sequence is that of Probable sucrose-phosphate synthase 1 (SPS1) from Citrus unshiu (Satsuma mandarin).